Consider the following 381-residue polypeptide: L-lactate dehydrogenase (381 aa).

The FMN hydroxy acid dehydrogenase domain occupies 1–380 (MIISSASDYR…KPEALVDLSK (380 aa)). Residue Y24 participates in substrate binding. Positions 106 and 127 each coordinate FMN. Y129 lines the substrate pocket. T155 contributes to the FMN binding site. R164 contacts substrate. FMN is bound at residue K251. H275 acts as the Proton acceptor in catalysis. Residue R278 participates in substrate binding. 306–330 (DSGIRNGLDIVRMLALGADATMLGR) contacts FMN.

It belongs to the FMN-dependent alpha-hydroxy acid dehydrogenase family. FMN is required as a cofactor.

It localises to the cell inner membrane. The catalysed reaction is (S)-lactate + A = pyruvate + AH2. Catalyzes the conversion of L-lactate to pyruvate. Is coupled to the respiratory chain. This is L-lactate dehydrogenase from Haemophilus influenzae (strain PittEE).